A 452-amino-acid polypeptide reads, in one-letter code: tRNA(Ile)-lysidine synthase (452 aa).

27-32 (SGGIDS) is an ATP binding site.

Belongs to the tRNA(Ile)-lysidine synthase family.

Its subcellular location is the cytoplasm. It catalyses the reaction cytidine(34) in tRNA(Ile2) + L-lysine + ATP = lysidine(34) in tRNA(Ile2) + AMP + diphosphate + H(+). Its function is as follows. Ligates lysine onto the cytidine present at position 34 of the AUA codon-specific tRNA(Ile) that contains the anticodon CAU, in an ATP-dependent manner. Cytidine is converted to lysidine, thus changing the amino acid specificity of the tRNA from methionine to isoleucine. This Persephonella marina (strain DSM 14350 / EX-H1) protein is tRNA(Ile)-lysidine synthase.